The following is a 639-amino-acid chain: Extracellular metalloproteinase NpIII (639 aa).

Positions M1 to V16 are cleaved as a signal peptide. Residues C17–E245 constitute a propeptide that is removed on maturation. N-linked (GlcNAc...) asparagine glycosylation is found at N287, N320, N336, and N368. A Zn(2+)-binding site is contributed by H429. E430 is a catalytic residue. Residue H433 participates in Zn(2+) binding. N509 carries N-linked (GlcNAc...) asparagine glycosylation.

Belongs to the peptidase M36 family. It depends on Zn(2+) as a cofactor.

The protein localises to the secreted. Secreted metalloproteinase that allows assimilation of proteinaceous substrates. The polypeptide is Extracellular metalloproteinase NpIII (NpIII) (Aspergillus oryzae (strain ATCC 42149 / RIB 40) (Yellow koji mold)).